The primary structure comprises 370 residues: Neutral protease 2 homolog AFUA_4G13750 (370 aa).

A signal peptide spans 1–19; the sequence is MKVTILASAILALINGALA. Positions 20 to 172 are excised as a propeptide; that stretch reads LPANTPTLDV…PQAIKLLDRR (153 aa). Intrachain disulfides connect Cys178–Cys250 and Cys257–Cys275. His300 contributes to the Zn(2+) binding site. Glu301 is a catalytic residue. Residues His304 and Asp315 each coordinate Zn(2+).

This sequence belongs to the peptidase M35 family. Zn(2+) serves as cofactor.

The protein resides in the secreted. The catalysed reaction is Preferential cleavage of bonds with hydrophobic residues in P1'. Also 3-Asn-|-Gln-4 and 8-Gly-|-Ser-9 bonds in insulin B chain.. In terms of biological role, secreted metalloproteinase that allows assimilation of proteinaceous substrates. Shows high activities on basic nuclear substrates such as histone and protamine. May be involved in virulence. The protein is Neutral protease 2 homolog AFUA_4G13750 of Aspergillus fumigatus (strain ATCC MYA-4609 / CBS 101355 / FGSC A1100 / Af293) (Neosartorya fumigata).